The sequence spans 322 residues: Polyisoprenyl-teichoic acid--peptidoglycan teichoic acid transferase TagT (322 aa).

Residues 1-19 (MEERSQRRKKKRKLKKWVK) lie on the Cytoplasmic side of the membrane. The chain crosses the membrane as a helical; Signal-anchor for type II membrane protein span at residues 20–40 (VVAGLMAFLVIAAGSVGAYAF). Over 41-322 (VKLNNASKEA…KKELQNDLGV (282 aa)) the chain is Extracellular.

Belongs to the LytR/CpsA/Psr (LCP) family. Interacts with MreB.

The protein localises to the cell membrane. Its pathway is cell wall biogenesis. In terms of biological role, may catalyze the final step in cell wall teichoic acid biosynthesis, the transfer of the anionic cell wall polymers (APs) from their lipid-linked precursor to the cell wall peptidoglycan (PG). In Bacillus subtilis (strain 168), this protein is Polyisoprenyl-teichoic acid--peptidoglycan teichoic acid transferase TagT.